Reading from the N-terminus, the 322-residue chain is Phosphatidylserine decarboxylase proenzyme (322 aa).

Catalysis depends on charge relay system; for autoendoproteolytic cleavage activity residues D90, H147, and S254. Residue S254 is the Schiff-base intermediate with substrate; via pyruvic acid; for decarboxylase activity of the active site. S254 carries the pyruvic acid (Ser); by autocatalysis modification. Residues 293–322 form a disordered region; sequence PDAEPAPLPAEEIEAEHDASPLVDDKKDQV. Basic and acidic residues predominate over residues 308-322; that stretch reads EHDASPLVDDKKDQV.

The protein belongs to the phosphatidylserine decarboxylase family. PSD-B subfamily. Prokaryotic type I sub-subfamily. As to quaternary structure, heterodimer of a large membrane-associated beta subunit and a small pyruvoyl-containing alpha subunit. Pyruvate serves as cofactor. In terms of processing, is synthesized initially as an inactive proenzyme. Formation of the active enzyme involves a self-maturation process in which the active site pyruvoyl group is generated from an internal serine residue via an autocatalytic post-translational modification. Two non-identical subunits are generated from the proenzyme in this reaction, and the pyruvate is formed at the N-terminus of the alpha chain, which is derived from the carboxyl end of the proenzyme. The autoendoproteolytic cleavage occurs by a canonical serine protease mechanism, in which the side chain hydroxyl group of the serine supplies its oxygen atom to form the C-terminus of the beta chain, while the remainder of the serine residue undergoes an oxidative deamination to produce ammonia and the pyruvoyl prosthetic group on the alpha chain. During this reaction, the Ser that is part of the protease active site of the proenzyme becomes the pyruvoyl prosthetic group, which constitutes an essential element of the active site of the mature decarboxylase.

The protein resides in the cell membrane. It catalyses the reaction a 1,2-diacyl-sn-glycero-3-phospho-L-serine + H(+) = a 1,2-diacyl-sn-glycero-3-phosphoethanolamine + CO2. Its pathway is phospholipid metabolism; phosphatidylethanolamine biosynthesis; phosphatidylethanolamine from CDP-diacylglycerol: step 2/2. Its function is as follows. Catalyzes the formation of phosphatidylethanolamine (PtdEtn) from phosphatidylserine (PtdSer). This chain is Phosphatidylserine decarboxylase proenzyme, found in Escherichia coli O45:K1 (strain S88 / ExPEC).